A 369-amino-acid chain; its full sequence is Anhydro-N-acetylmuramic acid kinase (369 aa).

12–19 (GTSLDGVD) contributes to the ATP binding site.

Belongs to the anhydro-N-acetylmuramic acid kinase family.

It carries out the reaction 1,6-anhydro-N-acetyl-beta-muramate + ATP + H2O = N-acetyl-D-muramate 6-phosphate + ADP + H(+). The protein operates within amino-sugar metabolism; 1,6-anhydro-N-acetylmuramate degradation. It participates in cell wall biogenesis; peptidoglycan recycling. In terms of biological role, catalyzes the specific phosphorylation of 1,6-anhydro-N-acetylmuramic acid (anhMurNAc) with the simultaneous cleavage of the 1,6-anhydro ring, generating MurNAc-6-P. Is required for the utilization of anhMurNAc either imported from the medium or derived from its own cell wall murein, and thus plays a role in cell wall recycling. The sequence is that of Anhydro-N-acetylmuramic acid kinase from Escherichia coli O157:H7.